The following is a 400-amino-acid chain: uncharacterized protein (400 aa).

Positions 1–23 are cleaved as a signal peptide; it reads MSRKLLLALTFLVVLGIAVVVMA.

This is an uncharacterized protein from Archaeoglobus fulgidus (strain ATCC 49558 / DSM 4304 / JCM 9628 / NBRC 100126 / VC-16).